Reading from the N-terminus, the 286-residue chain is 4-hydroxy-tetrahydrodipicolinate synthase (286 aa).

Position 42 (threonine 42) interacts with pyruvate. The Proton donor/acceptor role is filled by tyrosine 129. The active-site Schiff-base intermediate with substrate is lysine 157. Residue isoleucine 196 coordinates pyruvate.

Belongs to the DapA family. Homotetramer; dimer of dimers.

Its subcellular location is the cytoplasm. The enzyme catalyses L-aspartate 4-semialdehyde + pyruvate = (2S,4S)-4-hydroxy-2,3,4,5-tetrahydrodipicolinate + H2O + H(+). It functions in the pathway amino-acid biosynthesis; L-lysine biosynthesis via DAP pathway; (S)-tetrahydrodipicolinate from L-aspartate: step 3/4. Functionally, catalyzes the condensation of (S)-aspartate-beta-semialdehyde [(S)-ASA] and pyruvate to 4-hydroxy-tetrahydrodipicolinate (HTPA). The chain is 4-hydroxy-tetrahydrodipicolinate synthase from Chlamydia trachomatis serovar A (strain ATCC VR-571B / DSM 19440 / HAR-13).